Consider the following 221-residue polypeptide: 7-cyano-7-deazaguanine synthase (221 aa).

10-20 is a binding site for ATP; sequence FSGGQDSTTCL. Zn(2+) is bound by residues cysteine 187, cysteine 196, cysteine 199, and cysteine 202.

It belongs to the QueC family. Homodimer. Zn(2+) is required as a cofactor.

It catalyses the reaction 7-carboxy-7-deazaguanine + NH4(+) + ATP = 7-cyano-7-deazaguanine + ADP + phosphate + H2O + H(+). Its pathway is purine metabolism; 7-cyano-7-deazaguanine biosynthesis. Its function is as follows. Catalyzes the ATP-dependent conversion of 7-carboxy-7-deazaguanine (CDG) to 7-cyano-7-deazaguanine (preQ(0)). This chain is 7-cyano-7-deazaguanine synthase, found in Shouchella clausii (strain KSM-K16) (Alkalihalobacillus clausii).